The following is a 481-amino-acid chain: Glutamate mutase epsilon subunit (481 aa).

Arg-67 contacts L-glutamate. Gly-69 provides a ligand contact to adenosylcob(III)alamin. Arg-99 is a binding site for L-glutamate. Asn-122 is a binding site for adenosylcob(III)alamin. L-glutamate is bound by residues 148 to 149 (RH), Glu-170, and Tyr-176. Pro-179 provides a ligand contact to adenosylcob(III)alamin. Tyr-180 provides a ligand contact to L-glutamate. Residues Phe-296, Lys-325, Glu-329, and Ile-333 each coordinate adenosylcob(III)alamin.

It belongs to the methylaspartate mutase GlmE subunit family. Heterotetramer composed of 2 epsilon subunits (GlmE) and 2 sigma subunits (GlmS). GlmE exists as a homodimer and GlmS as a monomer. Adenosylcob(III)alamin is required as a cofactor.

It carries out the reaction (2S,3S)-3-methyl-L-aspartate = L-glutamate. Its pathway is amino-acid degradation; L-glutamate degradation via mesaconate pathway; acetate and pyruvate from L-glutamate: step 1/4. Its function is as follows. Catalyzes the carbon skeleton rearrangement of L-glutamate to L-threo-3-methylaspartate ((2S,3S)-3-methylaspartate). In Yersinia enterocolitica serotype O:8 / biotype 1B (strain NCTC 13174 / 8081), this protein is Glutamate mutase epsilon subunit.